A 128-amino-acid chain; its full sequence is Photosystem II reaction center Psb28 protein (128 aa).

The tract at residues 109–128 is disordered; it reads SGLGYSQDSGEAPASDSSNG. Residues 111-128 are compositionally biased toward polar residues; the sequence is LGYSQDSGEAPASDSSNG.

It belongs to the Psb28 family. Part of the photosystem II complex.

Its subcellular location is the cellular thylakoid membrane. The sequence is that of Photosystem II reaction center Psb28 protein from Synechococcus sp. (strain CC9311).